The primary structure comprises 351 residues: Regulator of V-ATPase in vacuolar membrane protein 2 (351 aa).

Component of the RAVE complex composed of RAV1, RAV2 and CBF3D/SKP1. Within the complex, it interacts directly with RAV1 and CBF3D. Interacts with the V-ATPase V1 subunits VMA1, VMA2 and VMA8.

The protein localises to the cytoplasm. Its subcellular location is the early endosome membrane. Functionally, component of the RAVE complex, which is required for stable assembly of the vacuolar ATPase complex V-ATPase under many conditions. May be required for transport between the early endosome and the late endosome/prevacuolar compartment (PVC). The protein is Regulator of V-ATPase in vacuolar membrane protein 2 (RAV2) of Saccharomyces cerevisiae (strain ATCC 204508 / S288c) (Baker's yeast).